The sequence spans 302 residues: Probable protein S-acyltransferase 13 (302 aa).

Helical transmembrane passes span 17–37 (SIMI…VVVV) and 56–76 (VLAF…SVVV). In terms of domain architecture, DHHC spans 116–166 (RYCRKCNQYKPPRSHHCSVCGRCILKMDHHCVWVVNCVGANNYKSFLLFLF). Cys146 (S-palmitoyl cysteine intermediate) is an active-site residue. 2 helical membrane-spanning segments follow: residues 166–186 (FYTF…FLVF) and 204–224 (SFVA…FLIM).

It belongs to the DHHC palmitoyltransferase family.

The protein resides in the cell membrane. It is found in the cytoplasmic vesicle membrane. The enzyme catalyses L-cysteinyl-[protein] + hexadecanoyl-CoA = S-hexadecanoyl-L-cysteinyl-[protein] + CoA. In terms of biological role, palmitoyl acyltransferase. The protein is Probable protein S-acyltransferase 13 (PAT13) of Arabidopsis thaliana (Mouse-ear cress).